We begin with the raw amino-acid sequence, 66 residues long: Muscarinic toxin 1 (66 aa).

Cystine bridges form between cysteine 3/cysteine 24, cysteine 17/cysteine 42, cysteine 46/cysteine 58, and cysteine 59/cysteine 64.

Belongs to the three-finger toxin family. Short-chain subfamily. Aminergic toxin sub-subfamily. As to expression, expressed by the venom gland.

The protein localises to the secreted. Its function is as follows. Shows a non-competitive interaction with adrenergic and muscarinic receptors. Binds to alpha-2b (ADRA2B) (IC(50)=2.3 nM), alpha-1a (ADRA1A), alpha-1b (ADRA1B), and alpha-2c (ADRA2C) adrenergic receptors. Reversibly binds to M1 (CHRM1) muscarinic acetylcholine receptors, probably by interacting with the orthosteric site. Also reveals a slightly weaker effect at M3 (CHRM3) and M4 (CHRM4) receptors. The order of potency is ADRA2B&gt;&gt;CHRM1&gt;ADRA1A&gt;ADRA1B&gt;ADRA2C/CHRM4. This chain is Muscarinic toxin 1, found in Dendroaspis angusticeps (Eastern green mamba).